Consider the following 293-residue polypeptide: Phosphoribosylaminoimidazole-succinocarboxamide synthase (293 aa).

It belongs to the SAICAR synthetase family.

The enzyme catalyses 5-amino-1-(5-phospho-D-ribosyl)imidazole-4-carboxylate + L-aspartate + ATP = (2S)-2-[5-amino-1-(5-phospho-beta-D-ribosyl)imidazole-4-carboxamido]succinate + ADP + phosphate + 2 H(+). It functions in the pathway purine metabolism; IMP biosynthesis via de novo pathway; 5-amino-1-(5-phospho-D-ribosyl)imidazole-4-carboxamide from 5-amino-1-(5-phospho-D-ribosyl)imidazole-4-carboxylate: step 1/2. The polypeptide is Phosphoribosylaminoimidazole-succinocarboxamide synthase (Bordetella parapertussis (strain 12822 / ATCC BAA-587 / NCTC 13253)).